Here is a 120-residue protein sequence, read N- to C-terminus: MFLLHEYDIFWAFLMISSVIPILAFLISGVLAPIREGPEKLSSYESGIEPMGDAWLQFRIRYYMFALVFVVFDVETVFLYPWAMSFDVLGVSAFIEALIFVLIPIVGSVYAWRKGALEWS.

The next 3 helical transmembrane spans lie at 9 to 29, 64 to 84, and 88 to 108; these read IFWAFLMISSVIPILAFLISG, MFALVFVVFDVETVFLYPWAM, and VLGVSAFIEALIFVLIPIVGS.

It belongs to the complex I subunit 3 family. NDH is composed of at least 16 different subunits, 5 of which are encoded in the nucleus.

It localises to the plastid. The protein localises to the chloroplast thylakoid membrane. It carries out the reaction a plastoquinone + NADH + (n+1) H(+)(in) = a plastoquinol + NAD(+) + n H(+)(out). The enzyme catalyses a plastoquinone + NADPH + (n+1) H(+)(in) = a plastoquinol + NADP(+) + n H(+)(out). NDH shuttles electrons from NAD(P)H:plastoquinone, via FMN and iron-sulfur (Fe-S) centers, to quinones in the photosynthetic chain and possibly in a chloroplast respiratory chain. The immediate electron acceptor for the enzyme in this species is believed to be plastoquinone. Couples the redox reaction to proton translocation, and thus conserves the redox energy in a proton gradient. In Illicium oligandrum (Star anise), this protein is NAD(P)H-quinone oxidoreductase subunit 3, chloroplastic.